A 469-amino-acid polypeptide reads, in one-letter code: 3-isopropylmalate dehydratase large subunit (469 aa).

Residues Cys350, Cys410, and Cys413 each contribute to the [4Fe-4S] cluster site.

It belongs to the aconitase/IPM isomerase family. LeuC type 1 subfamily. As to quaternary structure, heterodimer of LeuC and LeuD. [4Fe-4S] cluster is required as a cofactor.

It catalyses the reaction (2R,3S)-3-isopropylmalate = (2S)-2-isopropylmalate. The protein operates within amino-acid biosynthesis; L-leucine biosynthesis; L-leucine from 3-methyl-2-oxobutanoate: step 2/4. In terms of biological role, catalyzes the isomerization between 2-isopropylmalate and 3-isopropylmalate, via the formation of 2-isopropylmaleate. This chain is 3-isopropylmalate dehydratase large subunit, found in Sinorhizobium fredii (strain NBRC 101917 / NGR234).